A 247-amino-acid chain; its full sequence is 1-(5-phosphoribosyl)-5-[(5-phosphoribosylamino)methylideneamino] imidazole-4-carboxamide isomerase (247 aa).

The active-site Proton acceptor is the Asp8. Asp129 (proton donor) is an active-site residue.

The protein belongs to the HisA/HisF family.

It localises to the cytoplasm. The enzyme catalyses 1-(5-phospho-beta-D-ribosyl)-5-[(5-phospho-beta-D-ribosylamino)methylideneamino]imidazole-4-carboxamide = 5-[(5-phospho-1-deoxy-D-ribulos-1-ylimino)methylamino]-1-(5-phospho-beta-D-ribosyl)imidazole-4-carboxamide. Its pathway is amino-acid biosynthesis; L-histidine biosynthesis; L-histidine from 5-phospho-alpha-D-ribose 1-diphosphate: step 4/9. In Solidesulfovibrio magneticus (strain ATCC 700980 / DSM 13731 / RS-1) (Desulfovibrio magneticus), this protein is 1-(5-phosphoribosyl)-5-[(5-phosphoribosylamino)methylideneamino] imidazole-4-carboxamide isomerase.